Consider the following 196-residue polypeptide: Peroxiredoxin TSA1-B (196 aa).

Positions 3–161 constitute a Thioredoxin domain; that stretch reads PVVQQPAPSF…SLRLLEAFQF (159 aa). Position 45 to 47 (45 to 47) interacts with substrate; it reads TFV. The Cysteine sulfenic acid (-SOH) intermediate role is filled by Cys-48. Residue Arg-124 coordinates substrate. The disordered stretch occupies residues 173–196; that stretch reads WHPGDETIKPSPEASKEYFNKVNK. Positions 175-196 are enriched in basic and acidic residues; that stretch reads PGDETIKPSPEASKEYFNKVNK.

The protein belongs to the peroxiredoxin family. AhpC/Prx1 subfamily. Homodimer; disulfide-linked, upon oxidation.

It is found in the cell surface. It localises to the nucleus. The protein resides in the cytoplasm. It catalyses the reaction a hydroperoxide + [thioredoxin]-dithiol = an alcohol + [thioredoxin]-disulfide + H2O. Thiol-specific peroxidase that catalyzes the reduction of hydrogen peroxide and organic hydroperoxides to water and alcohols, respectively. Plays a role in cell protection against oxidative stress by detoxifying peroxides and as sensor of hydrogen peroxide-mediated signaling events. Also involved in the correct composition of the hyphal cell wall. This chain is Peroxiredoxin TSA1-B, found in Candida albicans (strain SC5314 / ATCC MYA-2876) (Yeast).